Reading from the N-terminus, the 278-residue chain is Tryptophan synthase alpha chain (278 aa).

Active-site proton acceptor residues include E50 and D61.

The protein belongs to the TrpA family. Tetramer of two alpha and two beta chains.

The catalysed reaction is (1S,2R)-1-C-(indol-3-yl)glycerol 3-phosphate + L-serine = D-glyceraldehyde 3-phosphate + L-tryptophan + H2O. The protein operates within amino-acid biosynthesis; L-tryptophan biosynthesis; L-tryptophan from chorismate: step 5/5. In terms of biological role, the alpha subunit is responsible for the aldol cleavage of indoleglycerol phosphate to indole and glyceraldehyde 3-phosphate. The chain is Tryptophan synthase alpha chain from Methylobacterium nodulans (strain LMG 21967 / CNCM I-2342 / ORS 2060).